The chain runs to 549 residues: Cation/acetate symporter ActP (549 aa).

13 helical membrane passes run 33–53 (WQAI…TYWA), 77–97 (LAIA…ALVF), 103–123 (GLIY…LIAE), 148–168 (ILSA…QMVG), 183–203 (IAVV…GMLA), 206–226 (WVQI…AFMV), 262–282 (ISAL…PHIL), 303–323 (GFMG…IMLV), 355–375 (LFLG…VAGL), 404–424 (VSKI…FLFE), 428–448 (IAFM…PIIL), 464–484 (GGWL…TIWV), and 493–513 (IFPY…GIWF).

Belongs to the sodium:solute symporter (SSF) (TC 2.A.21) family.

It localises to the cell inner membrane. In terms of biological role, transports acetate. The polypeptide is Cation/acetate symporter ActP (Salmonella paratyphi C (strain RKS4594)).